The chain runs to 122 residues: Large ribosomal subunit protein uL14c (122 aa).

This sequence belongs to the universal ribosomal protein uL14 family. Part of the 50S ribosomal subunit.

It is found in the plastid. Its subcellular location is the chloroplast. Functionally, binds to 23S rRNA. In Amborella trichopoda, this protein is Large ribosomal subunit protein uL14c.